A 229-amino-acid chain; its full sequence is Ribonuclease 3 (229 aa).

Positions 5 to 127 (LDRLERKLGY…LIGAIYQDAD (123 aa)) constitute an RNase III domain. Glu40 serves as a coordination point for Mg(2+). The active site involves Asp44. Mg(2+)-binding residues include Asp113 and Glu116. The active site involves Glu116. The DRBM domain occupies 154–224 (DPKTRLQEFL…AAAALIALGV (71 aa)).

The protein belongs to the ribonuclease III family. As to quaternary structure, homodimer. Requires Mg(2+) as cofactor.

It localises to the cytoplasm. It carries out the reaction Endonucleolytic cleavage to 5'-phosphomonoester.. Its function is as follows. Digests double-stranded RNA. Involved in the processing of primary rRNA transcript to yield the immediate precursors to the large and small rRNAs (23S and 16S). Processes some mRNAs, and tRNAs when they are encoded in the rRNA operon. Processes pre-crRNA and tracrRNA of type II CRISPR loci if present in the organism. In Pseudomonas entomophila (strain L48), this protein is Ribonuclease 3.